Consider the following 480-residue polypeptide: Probable tRNA N6-adenosine threonylcarbamoyltransferase, mitochondrial (480 aa).

The N-terminal 86 residues, Met1–Val86, are a transit peptide targeting the mitochondrion. A divalent metal cation contacts are provided by His194 and His198. Substrate is bound by residues Leu217–Gly221, Asp250, Gly265, Glu269, Ser373–Asn374, and Thr401. Asp402 provides a ligand contact to a divalent metal cation.

Belongs to the KAE1 / TsaD family. Homodimer. A divalent metal cation serves as cofactor. As to expression, expressed in young developing leaves, roots, flowers and siliques.

It localises to the mitochondrion inner membrane. It catalyses the reaction L-threonylcarbamoyladenylate + adenosine(37) in tRNA = N(6)-L-threonylcarbamoyladenosine(37) in tRNA + AMP + H(+). Required for the formation of a threonylcarbamoyl group on adenosine at position 37 (t(6)A37) in mitochondrial tRNAs that read codons beginning with adenine. Probably involved in the transfer of the threonylcarbamoyl moiety of threonylcarbamoyl-AMP (TC-AMP) to the N6 group of A37. Involved in mitochondrial genome maintenance. May have a role in embryonic development in plants. In Arabidopsis thaliana (Mouse-ear cress), this protein is Probable tRNA N6-adenosine threonylcarbamoyltransferase, mitochondrial.